The following is a 207-amino-acid chain: Guanylate kinase (207 aa).

One can recognise a Guanylate kinase-like domain in the interval 4-184 (GLLFIVSAPS…AVSDLYKIIR (181 aa)). Residue 11 to 18 (APSGTGKS) participates in ATP binding.

This sequence belongs to the guanylate kinase family.

It localises to the cytoplasm. It catalyses the reaction GMP + ATP = GDP + ADP. Its function is as follows. Essential for recycling GMP and indirectly, cGMP. The protein is Guanylate kinase of Buchnera aphidicola subsp. Baizongia pistaciae (strain Bp).